The primary structure comprises 590 residues: Tape measure protein (590 aa).

Disordered regions lie at residues 1–35, 147–185, and 515–535; these read MKKPQEMQTMRRKVISDNKPTQEAAKSASNTLSGL, ESVGPLLPAPEAVNNDPDADFFPTPQPVEPKQESPEEKQ, and LKKNQPNAKPETSAKSPEAKQ. Residues 176-185 are compositionally biased toward basic and acidic residues; sequence PKQESPEEKQ.

It localises to the virion. Its function is as follows. Serves as a base for tail tube protein polymerization and acts as a template for tail length determination. This is Tape measure protein (29) from Escherichia coli (Bacteriophage T4).